Here is a 215-residue protein sequence, read N- to C-terminus: NAD(P)H-hydrate epimerase (215 aa).

In terms of domain architecture, YjeF N-terminal spans 10–212; that stretch reads SRELDDKTIN…DIGIYRGNAF (203 aa). Residue 59–63 coordinates (6S)-NADPHX; the sequence is NNGGD. Residues Asn-60 and Asp-122 each coordinate K(+). (6S)-NADPHX-binding positions include 126 to 132 and Asp-155; that span reads GSGLSRN. Ser-158 contacts K(+).

Belongs to the NnrE/AIBP family. It depends on K(+) as a cofactor.

It catalyses the reaction (6R)-NADHX = (6S)-NADHX. The catalysed reaction is (6R)-NADPHX = (6S)-NADPHX. In terms of biological role, catalyzes the epimerization of the S- and R-forms of NAD(P)HX, a damaged form of NAD(P)H that is a result of enzymatic or heat-dependent hydration. This is a prerequisite for the S-specific NAD(P)H-hydrate dehydratase to allow the repair of both epimers of NAD(P)HX. The chain is NAD(P)H-hydrate epimerase from Lentilactobacillus buchneri (strain NRRL B-30929) (Lactobacillus buchneri).